The following is a 373-amino-acid chain: Melanoma-associated antigen C2 (373 aa).

The tract at residues Met-1–Ser-102 is disordered. Residues Ser-40–Ser-60 are compositionally biased toward low complexity. The segment covering Ser-85–Gly-94 has biased composition (pro residues). Residues Ser-135–Glu-373 are interaction with TRIM28. The MAGE domain maps to Leu-141 to Ala-336.

As to quaternary structure, interacts with TRIM28 and UBE2H. As to expression, not expressed in normal tissues, except in germ cells in the seminiferous tubules and in Purkinje cells of the cerebellum. Expressed in various tumors, including melanoma, lymphoma, as well as pancreatic cancer, mammary gland cancer, non-small cell lung cancer and liver cancer. In hepatocellular carcinoma, there is an inverse correlation between tumor differentiation and protein expression, i.e. the lower the differentiation, the higher percentage of expression.

It localises to the cytoplasm. The protein resides in the nucleus. Functionally, proposed to enhance ubiquitin ligase activity of RING-type zinc finger-containing E3 ubiquitin-protein ligases. In vitro enhances ubiquitin ligase activity of TRIM28 and stimulates p53/TP53 ubiquitination in presence of Ubl-conjugating enzyme UBE2H leading to p53/TP53 degradation. Proposed to act through recruitment and/or stabilization of the Ubl-conjugating enzymes (E2) at the E3:substrate complex. The protein is Melanoma-associated antigen C2 (MAGEC2) of Homo sapiens (Human).